A 367-amino-acid chain; its full sequence is Flagellar P-ring protein (367 aa).

An N-terminal signal peptide occupies residues 1 to 21; that stretch reads MYVFKALAGIVLALVATLAHA.

This sequence belongs to the FlgI family. As to quaternary structure, the basal body constitutes a major portion of the flagellar organelle and consists of four rings (L,P,S, and M) mounted on a central rod.

The protein localises to the periplasm. It localises to the bacterial flagellum basal body. Assembles around the rod to form the L-ring and probably protects the motor/basal body from shearing forces during rotation. The polypeptide is Flagellar P-ring protein (Salmonella paratyphi C (strain RKS4594)).